A 103-amino-acid polypeptide reads, in one-letter code: Small ribosomal subunit protein uS10 (103 aa).

Belongs to the universal ribosomal protein uS10 family. In terms of assembly, part of the 30S ribosomal subunit.

Involved in the binding of tRNA to the ribosomes. The sequence is that of Small ribosomal subunit protein uS10 from Ruthia magnifica subsp. Calyptogena magnifica.